The primary structure comprises 446 residues: Tripartite motif-containing protein 43B (446 aa).

The RING-type zinc finger occupies 15–56; that stretch reads CVICLNYLVDPVTICCGHSFCRPCLCLSWEEAQSPANCPACR. The B box-type zinc finger occupies 88 to 129; that stretch reads SEKQICGTHRQTKKMFCDMDKSLLCLLCSNSQEHGAHKHYPI. Residues cysteine 93, histidine 96, cysteine 115, and histidine 121 each coordinate Zn(2+). Coiled-coil stretches lie at residues 129–158 and 190–220; these read IEEA…QRNL and LHKE…VKMD. In terms of domain architecture, B30.2/SPRY spans 269–446; it reads ELTAGPITGL…VRPFFYTGHR (178 aa).

The protein belongs to the TRIM/RBCC family.

In Homo sapiens (Human), this protein is Tripartite motif-containing protein 43B (TRIM43B).